The sequence spans 418 residues: Bifunctional protein GlmU (418 aa).

The interval 1 to 236 (MAAVIVLAAG…VWQTEGVNDR (236 aa)) is pyrophosphorylase. UDP-N-acetyl-alpha-D-glucosamine-binding positions include 7-10 (LAAG), K21, Q74, 79-80 (GT), 102-104 (YGD), G141, E155, N170, and N234. A Mg(2+)-binding site is contributed by D104. N234 is a binding site for Mg(2+). The interval 237–257 (VQLARMNAEVNRRIVTGWMRA) is linker. The N-acetyltransferase stretch occupies residues 258–418 (GVTIIDPTST…DDTLNPEADQ (161 aa)). Residues R339 and K357 each contribute to the UDP-N-acetyl-alpha-D-glucosamine site. H369 (proton acceptor) is an active-site residue. Y372 provides a ligand contact to UDP-N-acetyl-alpha-D-glucosamine. A386 serves as a coordination point for acetyl-CoA.

The protein in the N-terminal section; belongs to the N-acetylglucosamine-1-phosphate uridyltransferase family. This sequence in the C-terminal section; belongs to the transferase hexapeptide repeat family. As to quaternary structure, homotrimer. Mg(2+) serves as cofactor.

It is found in the cytoplasm. It catalyses the reaction alpha-D-glucosamine 1-phosphate + acetyl-CoA = N-acetyl-alpha-D-glucosamine 1-phosphate + CoA + H(+). The catalysed reaction is N-acetyl-alpha-D-glucosamine 1-phosphate + UTP + H(+) = UDP-N-acetyl-alpha-D-glucosamine + diphosphate. It functions in the pathway nucleotide-sugar biosynthesis; UDP-N-acetyl-alpha-D-glucosamine biosynthesis; N-acetyl-alpha-D-glucosamine 1-phosphate from alpha-D-glucosamine 6-phosphate (route II): step 2/2. It participates in nucleotide-sugar biosynthesis; UDP-N-acetyl-alpha-D-glucosamine biosynthesis; UDP-N-acetyl-alpha-D-glucosamine from N-acetyl-alpha-D-glucosamine 1-phosphate: step 1/1. Its pathway is bacterial outer membrane biogenesis; LPS lipid A biosynthesis. In terms of biological role, catalyzes the last two sequential reactions in the de novo biosynthetic pathway for UDP-N-acetylglucosamine (UDP-GlcNAc). The C-terminal domain catalyzes the transfer of acetyl group from acetyl coenzyme A to glucosamine-1-phosphate (GlcN-1-P) to produce N-acetylglucosamine-1-phosphate (GlcNAc-1-P), which is converted into UDP-GlcNAc by the transfer of uridine 5-monophosphate (from uridine 5-triphosphate), a reaction catalyzed by the N-terminal domain. This chain is Bifunctional protein GlmU, found in Cutibacterium acnes (strain DSM 16379 / KPA171202) (Propionibacterium acnes).